A 345-amino-acid polypeptide reads, in one-letter code: S-adenosylmethionine:tRNA ribosyltransferase-isomerase (345 aa).

It belongs to the QueA family. Monomer.

It localises to the cytoplasm. It carries out the reaction 7-aminomethyl-7-carbaguanosine(34) in tRNA + S-adenosyl-L-methionine = epoxyqueuosine(34) in tRNA + adenine + L-methionine + 2 H(+). Its pathway is tRNA modification; tRNA-queuosine biosynthesis. Functionally, transfers and isomerizes the ribose moiety from AdoMet to the 7-aminomethyl group of 7-deazaguanine (preQ1-tRNA) to give epoxyqueuosine (oQ-tRNA). This Helicobacter pylori (strain J99 / ATCC 700824) (Campylobacter pylori J99) protein is S-adenosylmethionine:tRNA ribosyltransferase-isomerase.